Consider the following 356-residue polypeptide: Probable dual-specificity RNA methyltransferase RlmN (356 aa).

Glu97 (proton acceptor) is an active-site residue. A Radical SAM core domain is found at 103–333; sequence YHHGNSVCIS…VTIRREMGSD (231 aa). Cysteines 110 and 338 form a disulfide. Residues Cys117, Cys121, and Cys124 each contribute to the [4Fe-4S] cluster site. S-adenosyl-L-methionine contacts are provided by residues 164–165, Ser196, 219–221, and Asn295; these read GE and SLH. The active-site S-methylcysteine intermediate is the Cys338.

The protein belongs to the radical SAM superfamily. RlmN family. It depends on [4Fe-4S] cluster as a cofactor.

It is found in the cytoplasm. It carries out the reaction adenosine(2503) in 23S rRNA + 2 reduced [2Fe-2S]-[ferredoxin] + 2 S-adenosyl-L-methionine = 2-methyladenosine(2503) in 23S rRNA + 5'-deoxyadenosine + L-methionine + 2 oxidized [2Fe-2S]-[ferredoxin] + S-adenosyl-L-homocysteine. The catalysed reaction is adenosine(37) in tRNA + 2 reduced [2Fe-2S]-[ferredoxin] + 2 S-adenosyl-L-methionine = 2-methyladenosine(37) in tRNA + 5'-deoxyadenosine + L-methionine + 2 oxidized [2Fe-2S]-[ferredoxin] + S-adenosyl-L-homocysteine. Functionally, specifically methylates position 2 of adenine 2503 in 23S rRNA and position 2 of adenine 37 in tRNAs. This is Probable dual-specificity RNA methyltransferase RlmN from Lachnoclostridium phytofermentans (strain ATCC 700394 / DSM 18823 / ISDg) (Clostridium phytofermentans).